The chain runs to 392 residues: Cell division protein DivIB (392 aa).

The segment at 1-87 (MSEKDNNLTP…ETQSSEAPIE (87 aa)) is disordered. At 1–131 (MSEKDNNLTP…KGSAPLLKKM (131 aa)) the chain is on the cytoplasmic side. Over residues 14–32 (KHLEYQKRKAEEAKKEKKA) the composition is skewed to basic and acidic residues. Residues 58–76 (TRDEAESAELLEEGFETNN) are compositionally biased toward acidic residues. A helical membrane pass occupies residues 132–152 (WPALAIVVLVFVGSLYLISPL). In terms of domain architecture, POTRA spans 153 to 224 (SKISTFSVSG…NRFEAIVKEH (72 aa)). Residues 153-392 (SKISTFSVSG…TAQSTTTSSN (240 aa)) lie on the Extracellular side of the membrane. The segment at 368-392 (ISAQNAKKTDASSENTAQSTTTSSN) is disordered.

It belongs to the FtsQ/DivIB family. DivIB subfamily.

It localises to the cell membrane. Its function is as follows. Cell division protein that may be involved in stabilizing or promoting the assembly of the division complex. The protein is Cell division protein DivIB of Lactococcus lactis subsp. lactis (strain IL1403) (Streptococcus lactis).